The sequence spans 339 residues: MTDRSPFETDMLTLTRYVMEKGRQAKGTGELTQLLNSMLTAIKAISSAVRKAGLANLYGIAGSVNVTGDEVKKLDVLSNSLVINMLQSSYSTCVLVSEENKEAVITAKERRGKYVVCFDPLDGSSNIDCLASIGTIFAIYRKTTEDEPSEKDALQPGRNIVAAGYALYGSATLVALSTGQGVDLFMLDPALGEFVLVEKDIRIKKKGKIFSLNEGYAKYFDAATAEYVQKKKFPEDGSAPYGARYVGSMVADVHRTLVYGGIFMYPANQKSPNGKLRLLYECNPVAYIIEQAGGMATTGTQPVLDVKPESIHQRVPLILGSPEDVQEYLSCVQRNQAGR.

Residues 3–10 are important for interaction with ALDOA; it reads DRSPFETD. AMP is bound by residues Val-18 and 28–32; that span reads TGELT. Residues Asp-69 and Glu-98 each contribute to the Mg(2+) site. An AMP-binding site is contributed by 113-114; sequence KY. Residues Asp-119, Leu-121, and Asp-122 each contribute to the Mg(2+) site. Asp-122 serves as a coordination point for substrate. Arg-141 contacts AMP. The short motif at 204-208 is the Nuclear localization signal element; sequence KKKGK. 213–216 is a substrate binding site; it reads NEGY. Tyr-216 and Tyr-219 each carry phosphotyrosine. Residues 245–249, Tyr-265, and Lys-275 each bind substrate; that span reads YVGSM. Glu-281 contacts Mg(2+).

Belongs to the FBPase class 1 family. As to quaternary structure, homotetramer. Interacts with ALDOA; the interaction blocks inhibition by physiological concentrations of AMP and reduces inhibition by Ca(2+). Interacts with alpha-actinin and F-actin. Requires Mg(2+) as cofactor.

It localises to the cell junction. The protein resides in the cytoplasm. Its subcellular location is the nucleus. The protein localises to the myofibril. It is found in the sarcomere. It localises to the z line. It catalyses the reaction beta-D-fructose 1,6-bisphosphate + H2O = beta-D-fructose 6-phosphate + phosphate. It functions in the pathway carbohydrate biosynthesis; gluconeogenesis. Its activity is regulated as follows. Subject to complex allosteric regulation. The enzyme can assume an active R-state, or an inactive T-state. Intermediate conformations may exist. AMP acts as an allosteric inhibitor. Fructose 2,6-bisphosphate acts as a competitive inhibitor. Strongly inhibited by Ca(2+). Its function is as follows. Catalyzes the hydrolysis of fructose 1,6-bisphosphate to fructose 6-phosphate in the presence of divalent cations and probably participates in glycogen synthesis from carbohydrate precursors, such as lactate. The polypeptide is Fructose-1,6-bisphosphatase isozyme 2 (Fbp2) (Rattus norvegicus (Rat)).